The chain runs to 453 residues: MAAAALRGGWCRCPRRCLGSGIQFLSSHNLPRGGSSYQISRPGGELTLTKSYSSGSRKGFLSGLLDNIKQELAQNKEMKESIKKFRDEAKKLEESDALQEARRKYKTIESETVRTSEAIKKKLGELTGTVKESLDEVSKSDLGRKIKEGVEEAARTAKQSAESVSKGGEKLGKTAAFKAISQGVESVKKEIDESVLGHTGTYRRPERLRKRTEFAGAKFKESKVFEANEEALGVVLHKDSKWYQQWKDFKDNNVVFNRFFEMKMKYDESDNVLIRASRALTDKVTDLLGGLFSKTEMSEVLTEILRVDPTFDKDRFLHQCETDIIPNILEAMISGELDILKDWCYEATYNQLAHSIQQAKALGLQFHSRILDISNVDLAMGKMMEQGPVLIVTFQAQLVMVIKNPKGEVFDGDPDKVLRMLYVWALCRDQEELNPYAAWRLLDISASSTEQIL.

Thr129 is modified (phosphothreonine). Residue Gly167–Thr174 participates in ATP binding. Residue Lys178 is modified to N6-succinyllysine. A Phosphoserine modification is found at Ser181. Lys218 is modified (N6-succinyllysine).

The protein belongs to the Tim44 family. Probable component of the PAM complex at least composed of a mitochondrial HSP70 protein, GRPEL1 or GRPEL2, TIMM44, TIMM16/PAM16 and TIMM14/DNAJC19. The complex interacts with the TIMM23 component of the TIM23 complex. Interacts with SLC25A4/ANT1 and SLC25A5/ANT2; leading to inhibit the presequence translocase TIMM23, thereby promoting stabilization of PINK1.

Its subcellular location is the mitochondrion inner membrane. The protein resides in the mitochondrion matrix. In terms of biological role, essential component of the PAM complex, a complex required for the translocation of transit peptide-containing proteins from the inner membrane into the mitochondrial matrix in an ATP-dependent manner. Recruits mitochondrial HSP70 to drive protein translocation into the matrix using ATP as an energy source. This chain is Mitochondrial import inner membrane translocase subunit TIM44 (Timm44), found in Rattus norvegicus (Rat).